The chain runs to 243 residues: MSVPTITYENFEGDPFIDSISTDDATKGAYEILEWAYRTYGDSIVYSCSFGAESMVLIDLIYQIKPDAQIVFLDTDLHFQETYDLIDRVKEHFPKLRIEMKKPDLTLEEQADKYNPALWKNNPNQCCYIRKIKPLEEVLGGAVAWVSGLRRDQSPTRANTNFINKDERFKSVKVCPLIYWTEDEVWDYIKKHDLPYNALHDQHYPSIGCIPCTAPVFDSEDSRAGRWSNFDKTECGLHVADKP.

It belongs to the PAPS reductase family. CysH subfamily. [4Fe-4S] cluster serves as cofactor.

The protein resides in the cytoplasm. It carries out the reaction [thioredoxin]-disulfide + sulfite + AMP + 2 H(+) = adenosine 5'-phosphosulfate + [thioredoxin]-dithiol. It functions in the pathway sulfur metabolism; hydrogen sulfide biosynthesis; sulfite from sulfate. In terms of biological role, catalyzes the formation of sulfite from adenosine 5'-phosphosulfate (APS) using thioredoxin as an electron donor. This chain is Adenosine 5'-phosphosulfate reductase, found in Staphylococcus haemolyticus (strain JCSC1435).